The chain runs to 264 residues: Indole-3-glycerol phosphate synthase (264 aa).

The protein belongs to the TrpC family.

It carries out the reaction 1-(2-carboxyphenylamino)-1-deoxy-D-ribulose 5-phosphate + H(+) = (1S,2R)-1-C-(indol-3-yl)glycerol 3-phosphate + CO2 + H2O. Its pathway is amino-acid biosynthesis; L-tryptophan biosynthesis; L-tryptophan from chorismate: step 4/5. The polypeptide is Indole-3-glycerol phosphate synthase (trpC) (Lactococcus lactis subsp. lactis (strain IL1403) (Streptococcus lactis)).